A 916-amino-acid chain; its full sequence is Protein translocase subunit SecA (916 aa).

Residues Gln87, 105-109, and Asp507 each bind ATP; that span reads GEGKT. Zn(2+)-binding residues include Cys900, Cys902, Cys911, and His912.

The protein belongs to the SecA family. In terms of assembly, monomer and homodimer. Part of the essential Sec protein translocation apparatus which comprises SecA, SecYEG and auxiliary proteins SecDF-YajC and YidC. Requires Zn(2+) as cofactor.

The protein localises to the cell inner membrane. The protein resides in the cytoplasm. The catalysed reaction is ATP + H2O + cellular proteinSide 1 = ADP + phosphate + cellular proteinSide 2.. In terms of biological role, part of the Sec protein translocase complex. Interacts with the SecYEG preprotein conducting channel. Has a central role in coupling the hydrolysis of ATP to the transfer of proteins into and across the cell membrane, serving both as a receptor for the preprotein-SecB complex and as an ATP-driven molecular motor driving the stepwise translocation of polypeptide chains across the membrane. In Neisseria meningitidis serogroup C / serotype 2a (strain ATCC 700532 / DSM 15464 / FAM18), this protein is Protein translocase subunit SecA.